The primary structure comprises 113 residues: Large ribosomal subunit protein P1z (113 aa).

The disordered stretch occupies residues 87–113 (AAAPAKEEKKDEPAEESDGDLGFGLFD). Phosphoserine is present on serine 103.

The protein belongs to the eukaryotic ribosomal protein P1/P2 family. In terms of assembly, P1 and P2 exist as dimers at the large ribosomal subunit.

Its function is as follows. Plays an important role in the elongation step of protein synthesis. The polypeptide is Large ribosomal subunit protein P1z (RPP1B) (Arabidopsis thaliana (Mouse-ear cress)).